The chain runs to 201 residues: Large ribosomal subunit protein uL4 (201 aa).

The interval 45 to 66 is disordered; it reads AQLTRSEVSGGGKKPWRQKGTG.

It belongs to the universal ribosomal protein uL4 family. In terms of assembly, part of the 50S ribosomal subunit.

Functionally, one of the primary rRNA binding proteins, this protein initially binds near the 5'-end of the 23S rRNA. It is important during the early stages of 50S assembly. It makes multiple contacts with different domains of the 23S rRNA in the assembled 50S subunit and ribosome. In terms of biological role, forms part of the polypeptide exit tunnel. This chain is Large ribosomal subunit protein uL4, found in Aeromonas hydrophila subsp. hydrophila (strain ATCC 7966 / DSM 30187 / BCRC 13018 / CCUG 14551 / JCM 1027 / KCTC 2358 / NCIMB 9240 / NCTC 8049).